Consider the following 397-residue polypeptide: Putative 8-amino-7-oxononanoate synthase (397 aa).

Arg22 provides a ligand contact to substrate. 109–110 (GW) lines the pyridoxal 5'-phosphate pocket. His139 provides a ligand contact to substrate. Residues Ser187, 212–215 (DEAH), and 241–244 (TFSK) contribute to the pyridoxal 5'-phosphate site. At Lys244 the chain carries N6-(pyridoxal phosphate)lysine. Residue Thr358 coordinates substrate.

Belongs to the class-II pyridoxal-phosphate-dependent aminotransferase family. BioF subfamily. Homodimer. Pyridoxal 5'-phosphate is required as a cofactor.

The catalysed reaction is 6-carboxyhexanoyl-[ACP] + L-alanine + H(+) = (8S)-8-amino-7-oxononanoate + holo-[ACP] + CO2. It participates in cofactor biosynthesis; biotin biosynthesis. Functionally, catalyzes the decarboxylative condensation of pimeloyl-[acyl-carrier protein] and L-alanine to produce 8-amino-7-oxononanoate (AON), [acyl-carrier protein], and carbon dioxide. The polypeptide is Putative 8-amino-7-oxononanoate synthase (bioF) (Bordetella parapertussis (strain 12822 / ATCC BAA-587 / NCTC 13253)).